The sequence spans 308 residues: Protein translocase subunit SecF (308 aa).

Transmembrane regions (helical) follow at residues 28–48 (SIIL…NFGI), 140–160 (IEAG…YIWV), 164–184 (WYFG…ALGF), 194–214 (LSTI…SVVI), 246–266 (ILTV…GGEA), and 272–292 (ILVF…SAPI).

The protein belongs to the SecD/SecF family. SecF subfamily. In terms of assembly, forms a complex with SecD. Part of the essential Sec protein translocation apparatus which comprises SecA, SecYEG and auxiliary proteins SecDF-YajC and YidC.

The protein resides in the cell inner membrane. Part of the Sec protein translocase complex. Interacts with the SecYEG preprotein conducting channel. SecDF uses the proton motive force (PMF) to complete protein translocation after the ATP-dependent function of SecA. This chain is Protein translocase subunit SecF, found in Rickettsia rickettsii (strain Sheila Smith).